The following is a 356-amino-acid chain: Heparan sulfate 2-O-sulfotransferase 1 (356 aa).

At 1–11 the chain is on the cytoplasmic side; sequence MGLLRIMMPPK. A helical; Signal-anchor for type II membrane protein membrane pass occupies residues 12–28; it reads LQLLAVLTFGVLMLFLE. The stretch at 24–51 forms a coiled coil; sequence MLFLENQIQNLEESREKLERAIARHEVR. Over 29–356 the chain is Lumenal; the sequence is NQIQNLEESR…FYEKIYPKSN (328 aa). Positions 83, 84, 85, 86, 87, and 88 each coordinate adenosine 3',5'-bisphosphate. N-linked (GlcNAc...) asparagine glycosylation is found at Asn108 and Asn127. Residues His140 and His142 contribute to the active site. Positions 164 and 172 each coordinate adenosine 3',5'-bisphosphate. 2 disulfides stabilise this stretch: Cys201–Cys209 and Cys222–Cys228. Tyr279, Ser285, Thr290, and Lys293 together coordinate adenosine 3',5'-bisphosphate.

Belongs to the sulfotransferase 3 family. Homotrimer.

The protein localises to the golgi apparatus membrane. Its function is as follows. Catalyzes the transfer of a sulfo group from 3'-phospho-5'-adenylyl sulfate (PAPS) to the 2-OH position of iduronic acid (IdoA) or glucuronic acid (GlcA) within the heparan sulfate (HS) chain and participates in HS biosynthesis. This chain is Heparan sulfate 2-O-sulfotransferase 1, found in Xenopus laevis (African clawed frog).